We begin with the raw amino-acid sequence, 281 residues long: MFELKDVTRRFGKKLAVDAVTLTIPQGQMVGIIGRSGAGKSTLLRMINRLQEPSSGSIHFAGVEVSGLRGRALRNWQRDCAMIFQQFNLVPRLDVLTNVMLGRLNHRSTLLSLLNIFTREERVHAIAALERLGIEQTALQPAGTLSGGQQQRVAIARALMQNPKMVLADEPIASLDPLNAKIVMDALRDINEREGITVVTNLHTLDTARNYCERIVGMAGGRVVFDGKPSDLTAEAVKEIYGTDKDGAGIDETMTSTSIDIAPERADNQSAGIQPLALAGL.

In terms of domain architecture, ABC transporter spans 2-245; it reads FELKDVTRRF…AVKEIYGTDK (244 aa). Position 34-41 (34-41) interacts with ATP; the sequence is GRSGAGKS.

Belongs to the ABC transporter superfamily. Phosphonates importer (TC 3.A.1.9.1) family. As to quaternary structure, the complex is composed of two ATP-binding proteins (PhnC), two transmembrane proteins (PhnE) and a solute-binding protein (PhnD).

Its subcellular location is the cell inner membrane. The enzyme catalyses phosphonate(out) + ATP + H2O = phosphonate(in) + ADP + phosphate + H(+). Functionally, part of the ABC transporter complex PhnCDE involved in phosphonates import. Responsible for energy coupling to the transport system. In Rhizobium etli (strain ATCC 51251 / DSM 11541 / JCM 21823 / NBRC 15573 / CFN 42), this protein is Phosphonates import ATP-binding protein PhnC.